The following is a 367-amino-acid chain: Heme A synthase (367 aa).

The next 8 membrane-spanning stretches (helical) occupy residues 25-45, 111-131, 139-159, 174-194, 210-230, 272-292, 305-325, and 327-347; these read ALRL…LVGG, LIAR…WLTG, WPLV…WWMV, LATH…IMRG, GLAA…ALVA, FIHR…MVIA, AVLL…TLLM, and VPLH…GFAV. His274 lines the heme pocket. His335 contacts heme.

The protein belongs to the COX15/CtaA family. Type 2 subfamily. Interacts with CtaB. The cofactor is heme b.

Its subcellular location is the cell membrane. The enzyme catalyses Fe(II)-heme o + 2 A + H2O = Fe(II)-heme a + 2 AH2. It participates in porphyrin-containing compound metabolism; heme A biosynthesis; heme A from heme O: step 1/1. Functionally, catalyzes the conversion of heme O to heme A by two successive hydroxylations of the methyl group at C8. The first hydroxylation forms heme I, the second hydroxylation results in an unstable dihydroxymethyl group, which spontaneously dehydrates, resulting in the formyl group of heme A. In Rhizobium etli (strain ATCC 51251 / DSM 11541 / JCM 21823 / NBRC 15573 / CFN 42), this protein is Heme A synthase.